A 456-amino-acid polypeptide reads, in one-letter code: Adenylosuccinate lyase (456 aa).

Residues 15–16 (RY), 90–92 (NHD), and 122–123 (TS) contribute to the N(6)-(1,2-dicarboxyethyl)-AMP site. The Proton donor/acceptor role is filled by His-171. Gln-247 provides a ligand contact to N(6)-(1,2-dicarboxyethyl)-AMP. Ser-295 (proton donor/acceptor) is an active-site residue. N(6)-(1,2-dicarboxyethyl)-AMP is bound by residues Ser-296, 301–303 (KVN), Asn-309, Arg-335, and 340–344 (STVLR).

This sequence belongs to the lyase 1 family. Adenylosuccinate lyase subfamily. Homotetramer. Residues from neighboring subunits contribute catalytic and substrate-binding residues to each active site.

It catalyses the reaction N(6)-(1,2-dicarboxyethyl)-AMP = fumarate + AMP. It carries out the reaction (2S)-2-[5-amino-1-(5-phospho-beta-D-ribosyl)imidazole-4-carboxamido]succinate = 5-amino-1-(5-phospho-beta-D-ribosyl)imidazole-4-carboxamide + fumarate. It functions in the pathway purine metabolism; AMP biosynthesis via de novo pathway; AMP from IMP: step 2/2. It participates in purine metabolism; IMP biosynthesis via de novo pathway; 5-amino-1-(5-phospho-D-ribosyl)imidazole-4-carboxamide from 5-amino-1-(5-phospho-D-ribosyl)imidazole-4-carboxylate: step 2/2. Catalyzes two reactions in de novo purine nucleotide biosynthesis. Catalyzes the breakdown of 5-aminoimidazole- (N-succinylocarboxamide) ribotide (SAICAR or 2-[5-amino-1-(5-phospho-beta-D-ribosyl)imidazole-4-carboxamido]succinate) to 5-aminoimidazole-4-carboxamide ribotide (AICAR or 5-amino-1-(5-phospho-beta-D-ribosyl)imidazole-4-carboxamide) and fumarate, and of adenylosuccinate (ADS or N(6)-(1,2-dicarboxyethyl)-AMP) to adenosine monophosphate (AMP) and fumarate. The chain is Adenylosuccinate lyase (purB) from Haemophilus influenzae (strain ATCC 51907 / DSM 11121 / KW20 / Rd).